Here is a 188-residue protein sequence, read N- to C-terminus: dCTP deaminase (188 aa).

DCTP contacts are provided by residues 111–116 (KSTYAR), 135–137 (TLE), Gln-156, Tyr-170, and Gln-180. The active-site Proton donor/acceptor is the Glu-137.

Belongs to the dCTP deaminase family. As to quaternary structure, homotrimer.

It catalyses the reaction dCTP + H2O + H(+) = dUTP + NH4(+). It participates in pyrimidine metabolism; dUMP biosynthesis; dUMP from dCTP (dUTP route): step 1/2. Catalyzes the deamination of dCTP to dUTP. This chain is dCTP deaminase, found in Pseudomonas fluorescens (strain Pf0-1).